Reading from the N-terminus, the 459-residue chain is Cyclooctatin synthase (459 aa).

Cys-408 provides a ligand contact to heme.

This sequence belongs to the cytochrome P450 family. Heme serves as cofactor.

The enzyme catalyses cyclooctat-9-ene-5,7-diol + AH2 + O2 = cyclooctatin + A + H2O. Its function is as follows. Involved in the biosynthesis of cyclooctatin, a potent inhibitor of lysophospholipase. Catalyzes the hydroxylation of cyclooctat-9-ene-5,7-diol at C-18 to yield the final product, cyclooctatin. The polypeptide is Cyclooctatin synthase (Streptomyces melanosporofaciens).